The chain runs to 1937 residues: Myosin-8 (1937 aa).

Residues 35–84 enclose the Myosin N-terminal SH3-like domain; it reads DAKTSVFVAEPKESYVKSVIQSKDGGKVTVKTESGATLTVKEDQVFPMNP. Residues threonine 66 and threonine 71 each carry the phosphothreonine modification. The Myosin motor domain maps to 88 to 781; that stretch reads DKIEDMAMMT…LLGLLEEMRD (694 aa). Residue lysine 132 is modified to N6,N6,N6-trimethyllysine. Residue 181 to 188 participates in ATP binding; that stretch reads GESGAGKT. Phosphotyrosine is present on tyrosine 389. The residue at position 419 (threonine 419) is a Phosphothreonine. Tyrosine 424 carries the post-translational modification Phosphotyrosine. The residue at position 625 (serine 625) is a Phosphoserine. The actin-binding stretch occupies residues 658 to 680; the sequence is LNKLMTNLRSTHPHFVRCIIPNE. Histidine 756 carries the pros-methylhistidine modification. An actin-binding region spans residues 760-774; it reads KFGHTKVFFKAGLLG. Residues 781 to 813 form the IQ domain; the sequence is DEKLAQIITRTQAVCRGYLMRVEYQKMLLRRES. Residues 842-1937 adopt a coiled-coil conformation; it reads LLKSAETEKE…REVHTKISAE (1096 aa). Residues serine 1091 and serine 1095 each carry the phosphoserine modification. Positions 1125–1171 are disordered; it reads IEAERASRAKAEKQRSDLSRELEEISERLEEAGGATSAQVEMNKKRE. The span at 1127–1155 shows a compositional bias: basic and acidic residues; that stretch reads AERASRAKAEKQRSDLSRELEEISERLEE. 2 positions are modified to phosphoserine: serine 1161 and serine 1236. Threonine 1254 is modified (phosphothreonine). A Phosphoserine modification is found at serine 1260. Residue threonine 1285 is modified to Phosphothreonine. Phosphoserine occurs at positions 1291, 1302, and 1305. The residue at position 1463 (tyrosine 1463) is a Phosphotyrosine. Threonine 1466 carries the post-translational modification Phosphothreonine. Tyrosine 1491 carries the post-translational modification Phosphotyrosine. At serine 1494 the chain carries Phosphoserine. Threonine 1500 is modified (phosphothreonine). Position 1513 is a phosphoserine (serine 1513). The residue at position 1516 (threonine 1516) is a Phosphothreonine. Serine 1553, serine 1573, serine 1602, serine 1713, and serine 1725 each carry phosphoserine. Threonine 1729 is modified (phosphothreonine). Serine 1738 is modified (phosphoserine).

Belongs to the TRAFAC class myosin-kinesin ATPase superfamily. Myosin family. In terms of assembly, muscle myosin is a hexameric protein that consists of 2 heavy chain subunits (MHC), 2 alkali light chain subunits (MLC) and 2 regulatory light chain subunits (MLC-2).

It is found in the cytoplasm. It localises to the myofibril. Its function is as follows. Muscle contraction. The protein is Myosin-8 (Myh8) of Mus musculus (Mouse).